We begin with the raw amino-acid sequence, 194 residues long: Histone H1.0 (194 aa).

N-acetylmethionine is present on Met-1. Low complexity predominate over residues 1 to 11 (MTENSTSAPAA). The tract at residues 1-29 (MTENSTSAPAAKPKRAKASKKSTDHPKYS) is disordered. Thr-2 is modified (N-acetylthreonine; in Histone H1.0, N-terminally processed). The H15 domain maps to 24-97 (DHPKYSDMVV…GASGSFRLAK (74 aa)). At Arg-42 the chain carries Citrulline. Residues 84–194 (TKGVGASGSF…SSAKRAGKKK (111 aa)) are disordered. An ADP-ribosylserine modification is found at Ser-104. A compositionally biased stretch (basic residues) spans 105-194 (VAFKKTKKEI…SSAKRAGKKK (90 aa)).

Belongs to the histone H1/H5 family. ADP-ribosylated on Ser-104 in response to DNA damage.

The protein localises to the nucleus. It is found in the chromosome. Functionally, histones H1 are necessary for the condensation of nucleosome chains into higher-order structures. The histones H1.0 are found in cells that are in terminal stages of differentiation or that have low rates of cell division. This Pongo abelii (Sumatran orangutan) protein is Histone H1.0 (H1-0).